The chain runs to 85 residues: Large ribosomal subunit protein bL27 (85 aa).

The segment at methionine 1–glycine 22 is disordered.

Belongs to the bacterial ribosomal protein bL27 family.

The chain is Large ribosomal subunit protein bL27 from Escherichia coli O6:K15:H31 (strain 536 / UPEC).